Reading from the N-terminus, the 149-residue chain is Large ribosomal subunit protein uL22 (149 aa).

Belongs to the universal ribosomal protein uL22 family. Part of the 50S ribosomal subunit.

Its function is as follows. This protein binds specifically to 23S rRNA; its binding is stimulated by other ribosomal proteins, e.g. L4, L17, and L20. It is important during the early stages of 50S assembly. It makes multiple contacts with different domains of the 23S rRNA in the assembled 50S subunit and ribosome. The globular domain of the protein is located near the polypeptide exit tunnel on the outside of the subunit, while an extended beta-hairpin is found that lines the wall of the exit tunnel in the center of the 70S ribosome. The protein is Large ribosomal subunit protein uL22 of Petrotoga mobilis (strain DSM 10674 / SJ95).